The following is a 267-amino-acid chain: 4-hydroxy-tetrahydrodipicolinate reductase (267 aa).

NAD(+)-binding positions include 12-17, 100-102, and 126-129; these read GPRGRM, GTT, and APNF. The Proton donor/acceptor role is filled by His-156. Position 157 (His-157) interacts with (S)-2,3,4,5-tetrahydrodipicolinate. Catalysis depends on Lys-160, which acts as the Proton donor. 166–167 provides a ligand contact to (S)-2,3,4,5-tetrahydrodipicolinate; sequence GT.

The protein belongs to the DapB family.

The protein resides in the cytoplasm. It catalyses the reaction (S)-2,3,4,5-tetrahydrodipicolinate + NAD(+) + H2O = (2S,4S)-4-hydroxy-2,3,4,5-tetrahydrodipicolinate + NADH + H(+). It carries out the reaction (S)-2,3,4,5-tetrahydrodipicolinate + NADP(+) + H2O = (2S,4S)-4-hydroxy-2,3,4,5-tetrahydrodipicolinate + NADPH + H(+). Its pathway is amino-acid biosynthesis; L-lysine biosynthesis via DAP pathway; (S)-tetrahydrodipicolinate from L-aspartate: step 4/4. Its function is as follows. Catalyzes the conversion of 4-hydroxy-tetrahydrodipicolinate (HTPA) to tetrahydrodipicolinate. In Bacillus licheniformis (strain ATCC 14580 / DSM 13 / JCM 2505 / CCUG 7422 / NBRC 12200 / NCIMB 9375 / NCTC 10341 / NRRL NRS-1264 / Gibson 46), this protein is 4-hydroxy-tetrahydrodipicolinate reductase.